Consider the following 203-residue polypeptide: ATP-dependent Clp protease proteolytic subunit 1 (203 aa).

The Nucleophile role is filled by serine 101. Histidine 126 is an active-site residue.

This sequence belongs to the peptidase S14 family. In terms of assembly, fourteen ClpP subunits assemble into 2 heptameric rings which stack back to back to give a disk-like structure with a central cavity, resembling the structure of eukaryotic proteasomes.

The protein resides in the cytoplasm. It catalyses the reaction Hydrolysis of proteins to small peptides in the presence of ATP and magnesium. alpha-casein is the usual test substrate. In the absence of ATP, only oligopeptides shorter than five residues are hydrolyzed (such as succinyl-Leu-Tyr-|-NHMec, and Leu-Tyr-Leu-|-Tyr-Trp, in which cleavage of the -Tyr-|-Leu- and -Tyr-|-Trp bonds also occurs).. In terms of biological role, cleaves peptides in various proteins in a process that requires ATP hydrolysis. Has a chymotrypsin-like activity. Plays a major role in the degradation of misfolded proteins. In Synechococcus sp. (strain JA-3-3Ab) (Cyanobacteria bacterium Yellowstone A-Prime), this protein is ATP-dependent Clp protease proteolytic subunit 1.